The chain runs to 390 residues: Queuine tRNA-ribosyltransferase (390 aa).

The Proton acceptor role is filled by D92. Substrate contacts are provided by residues 92 to 96 (DSGGF), D146, Q195, and G222. Positions 253 to 259 (GVGTPED) are RNA binding. The active-site Nucleophile is the D272. The interval 277–281 (TRNAR) is RNA binding; important for wobble base 34 recognition. 4 residues coordinate Zn(2+): C310, C312, C315, and H354.

It belongs to the queuine tRNA-ribosyltransferase family. In terms of assembly, homodimer. Within each dimer, one monomer is responsible for RNA recognition and catalysis, while the other monomer binds to the replacement base PreQ1. It depends on Zn(2+) as a cofactor.

The catalysed reaction is 7-aminomethyl-7-carbaguanine + guanosine(34) in tRNA = 7-aminomethyl-7-carbaguanosine(34) in tRNA + guanine. It functions in the pathway tRNA modification; tRNA-queuosine biosynthesis. Functionally, catalyzes the base-exchange of a guanine (G) residue with the queuine precursor 7-aminomethyl-7-deazaguanine (PreQ1) at position 34 (anticodon wobble position) in tRNAs with GU(N) anticodons (tRNA-Asp, -Asn, -His and -Tyr). Catalysis occurs through a double-displacement mechanism. The nucleophile active site attacks the C1' of nucleotide 34 to detach the guanine base from the RNA, forming a covalent enzyme-RNA intermediate. The proton acceptor active site deprotonates the incoming PreQ1, allowing a nucleophilic attack on the C1' of the ribose to form the product. After dissociation, two additional enzymatic reactions on the tRNA convert PreQ1 to queuine (Q), resulting in the hypermodified nucleoside queuosine (7-(((4,5-cis-dihydroxy-2-cyclopenten-1-yl)amino)methyl)-7-deazaguanosine). In Acidovorax sp. (strain JS42), this protein is Queuine tRNA-ribosyltransferase.